The chain runs to 321 residues: Transcriptional activator protein Pur-alpha (321 aa).

The tract at residues 1 to 54 (MADRDSGSEQGGAALGSGGSLGHPGSGSGSGGGGGGGGGGGGSGGGGGAPGGLQ) is disordered. Alanine 2 is subject to N-acetylalanine. A compositionally biased stretch (gly residues) spans 9 to 51 (EQGGAALGSGGSLGHPGSGSGSGGGGGGGGGGGGSGGGGGAPG). Serine 181 is subject to Phosphoserine. Low complexity predominate over residues 294–313 (LHQQQQQQQEETTAATLLLQ). Residues 294-321 (LHQQQQQQQEETTAATLLLQGEEEGEED) form a disordered region.

Belongs to the PUR DNA-binding protein family. In terms of assembly, homodimer, heterodimer with PURB and heterotrimer with PURB and YBX1/Y-box protein 1. Interacts with FMR1; this interaction occurs in association with polyribosome.

It localises to the nucleus. In terms of biological role, this is a probable transcription activator that specifically binds the purine-rich single strand of the PUR element located upstream of the c-Myc gene. May play a role in the initiation of DNA replication and in recombination. The protein is Transcriptional activator protein Pur-alpha (Pura) of Mus musculus (Mouse).